Reading from the N-terminus, the 315-residue chain is 4-hydroxy-3-methylbut-2-enyl diphosphate reductase (315 aa).

Residue cysteine 12 coordinates [4Fe-4S] cluster. (2E)-4-hydroxy-3-methylbut-2-enyl diphosphate is bound by residues histidine 41 and histidine 74. Histidine 41 and histidine 74 together coordinate dimethylallyl diphosphate. Residues histidine 41 and histidine 74 each contribute to the isopentenyl diphosphate site. Cysteine 96 lines the [4Fe-4S] cluster pocket. Residue histidine 124 participates in (2E)-4-hydroxy-3-methylbut-2-enyl diphosphate binding. Histidine 124 contributes to the dimethylallyl diphosphate binding site. Isopentenyl diphosphate is bound at residue histidine 124. Residue glutamate 126 is the Proton donor of the active site. Threonine 168 is a binding site for (2E)-4-hydroxy-3-methylbut-2-enyl diphosphate. Position 198 (cysteine 198) interacts with [4Fe-4S] cluster. Positions 226, 227, 228, and 270 each coordinate (2E)-4-hydroxy-3-methylbut-2-enyl diphosphate. Dimethylallyl diphosphate contacts are provided by serine 226, serine 227, asparagine 228, and serine 270. Residues serine 226, serine 227, asparagine 228, and serine 270 each contribute to the isopentenyl diphosphate site.

The protein belongs to the IspH family. [4Fe-4S] cluster is required as a cofactor.

It carries out the reaction isopentenyl diphosphate + 2 oxidized [2Fe-2S]-[ferredoxin] + H2O = (2E)-4-hydroxy-3-methylbut-2-enyl diphosphate + 2 reduced [2Fe-2S]-[ferredoxin] + 2 H(+). The enzyme catalyses dimethylallyl diphosphate + 2 oxidized [2Fe-2S]-[ferredoxin] + H2O = (2E)-4-hydroxy-3-methylbut-2-enyl diphosphate + 2 reduced [2Fe-2S]-[ferredoxin] + 2 H(+). The protein operates within isoprenoid biosynthesis; dimethylallyl diphosphate biosynthesis; dimethylallyl diphosphate from (2E)-4-hydroxy-3-methylbutenyl diphosphate: step 1/1. Its pathway is isoprenoid biosynthesis; isopentenyl diphosphate biosynthesis via DXP pathway; isopentenyl diphosphate from 1-deoxy-D-xylulose 5-phosphate: step 6/6. Functionally, catalyzes the conversion of 1-hydroxy-2-methyl-2-(E)-butenyl 4-diphosphate (HMBPP) into a mixture of isopentenyl diphosphate (IPP) and dimethylallyl diphosphate (DMAPP). Acts in the terminal step of the DOXP/MEP pathway for isoprenoid precursor biosynthesis. The sequence is that of 4-hydroxy-3-methylbut-2-enyl diphosphate reductase from Pseudomonas putida (strain W619).